We begin with the raw amino-acid sequence, 706 residues long: Polyribonucleotide nucleotidyltransferase (706 aa).

Aspartate 487 and aspartate 493 together coordinate Mg(2+). A KH domain is found at proline 553–isoleucine 612. Residues glycine 622–lysine 692 enclose the S1 motif domain.

It belongs to the polyribonucleotide nucleotidyltransferase family. Mg(2+) is required as a cofactor.

It is found in the cytoplasm. It catalyses the reaction RNA(n+1) + phosphate = RNA(n) + a ribonucleoside 5'-diphosphate. Its function is as follows. Involved in mRNA degradation. Catalyzes the phosphorolysis of single-stranded polyribonucleotides processively in the 3'- to 5'-direction. This is Polyribonucleotide nucleotidyltransferase from Neisseria meningitidis serogroup A / serotype 4A (strain DSM 15465 / Z2491).